We begin with the raw amino-acid sequence, 508 residues long: MSQTETQENKGLGRKVQAFGSFLSSMIMPNIGAFIAWGFIAAIFIDGGWWPNKDLSELAGPMISYLIPLLIAYSGGRLIHEMRGGIIAAVATMGVIVALPDTPMLLGAMIMGPLVGWLMKKTDEFIQPRTPQGFEMLFNNFSAGILGFIMTIVGFKILAPIMEFIMHILSLAVEALVHAHLLPLVSIIVEPAKIVFLNNAINHGVFTPLGADQAASAGQSILYTIESNPGPGLGILVAYMIFGKGTAKATSYGAGIIHFLGGIHEIYFPYVLMRPLLFIAVILGGMTGVATYSLLDFGFKSPASPGSFIVYMLNAPKGEFLHMVLGVLLAAIVSFIVAALILKFTKEPEEDLEAATEKMEASKGKKSSVSSKLKGNEDNNATSTTASTSTSENNEEQSEEALLDNYDTENVDAHDYSKVNHVIFACDAGMGSSAMGASMLRNKFKKAGIQDVNVTNTAINQLPSDAQLVITQKKLTDRAIKQVPNAIHISVDNFLNSPRYDELLENLK.

Over 1–30 the chain is Cytoplasmic; the sequence is MSQTETQENKGLGRKVQAFGSFLSSMIMPN. The region spanning 19–351 is the PTS EIIC type-2 domain; that stretch reads FGSFLSSMIM…LKFTKEPEED (333 aa). Residues 31–52 traverse the membrane as a helical segment; that stretch reads IGAFIAWGFIAAIFIDGGWWPN. Residues 53 to 56 are Extracellular-facing; the sequence is KDLS. A helical transmembrane segment spans residues 57 to 77; it reads ELAGPMISYLIPLLIAYSGGR. Over 78 to 141 the chain is Cytoplasmic; that stretch reads LIHEMRGGII…QGFEMLFNNF (64 aa). The chain crosses the membrane as a helical span at residues 142–163; sequence SAGILGFIMTIVGFKILAPIME. The Extracellular portion of the chain corresponds to 164 to 172; it reads FIMHILSLA. Residues 173-193 form a helical membrane-spanning segment; the sequence is VEALVHAHLLPLVSIIVEPAK. Topologically, residues 194–280 are cytoplasmic; the sequence is IVFLNNAINH…VLMRPLLFIA (87 aa). A helical transmembrane segment spans residues 281–300; sequence VILGGMTGVATYSLLDFGFK. Topologically, residues 301–320 are extracellular; it reads SPASPGSFIVYMLNAPKGEF. The chain crosses the membrane as a helical span at residues 321–342; it reads LHMVLGVLLAAIVSFIVAALIL. The Cytoplasmic portion of the chain corresponds to 343-508; it reads KFTKEPEEDL…RYDELLENLK (166 aa). Residues 355–400 form a disordered region; that stretch reads ATEKMEASKGKKSSVSSKLKGNEDNNATSTTASTSTSENNEEQSEE. Over residues 367-392 the composition is skewed to low complexity; that stretch reads SSVSSKLKGNEDNNATSTTASTSTSE. The region spanning 420–508 is the PTS EIIB type-2 domain; it reads NHVIFACDAG…RYDELLENLK (89 aa). The Phosphocysteine intermediate; for EIIB activity role is filled by C426. At C426 the chain carries Phosphocysteine; by EIIA.

As to quaternary structure, homodimer.

The protein resides in the cell membrane. It catalyses the reaction D-mannitol(out) + N(pros)-phospho-L-histidyl-[protein] = D-mannitol 1-phosphate(in) + L-histidyl-[protein]. Functionally, the phosphoenolpyruvate-dependent sugar phosphotransferase system (sugar PTS), a major carbohydrate active transport system, catalyzes the phosphorylation of incoming sugar substrates concomitantly with their translocation across the cell membrane. The enzyme II CmtAB PTS system is involved in D-mannitol transport. The chain is PTS system mannitol-specific EIICB component (mtlA) from Staphylococcus saprophyticus subsp. saprophyticus (strain ATCC 15305 / DSM 20229 / NCIMB 8711 / NCTC 7292 / S-41).